Consider the following 183-residue polypeptide: Capsid protein (183 aa).

The segment at 136–183 (NAPILSTLPETTVVRQRGRAPRRRTPSPRRRRSQSPRRRRSQSPASQC) is disordered. The segment covering 151 to 176 (QRGRAPRRRTPSPRRRRSQSPRRRRS) has biased composition (basic residues). One copy of the 1; half-length repeat lies at 155–161 (APRRRTP). The interval 155-177 (APRRRTPSPRRRRSQSPRRRRSQ) is 3 X 8 AA repeats of S-P-R-R-R-[PR]-S-Q. The Bipartite nuclear localization signal signature appears at 158–175 (RRTPSPRRRRSQSPRRRR). A phosphoserine; by host mark is found at serine 162 and serine 170. Tandem repeats lie at residues 162–169 (SPRRRRSQ) and 170–177 (SPRRRRSQ). The interval 177–183 (QSPASQC) is RNA binding.

It belongs to the orthohepadnavirus core antigen family. As to quaternary structure, homodimerizes, then multimerizes. Interacts with cytosol exposed regions of viral L glycoprotein present in the reticulum-to-Golgi compartment. Interacts with human FLNB. Phosphorylated form interacts with host importin alpha; this interaction depends on the exposure of the NLS, which itself depends upon genome maturation and/or phosphorylation of the capsid protein. Interacts with host NUP153. Phosphorylated by host SRPK1, SRPK2, and maybe protein kinase C or GAPDH. Phosphorylation is critical for pregenomic RNA packaging. Protein kinase C phosphorylation is stimulated by HBx protein and may play a role in transport of the viral genome to the nucleus at the late step during the viral replication cycle.

Its subcellular location is the virion. It localises to the host cytoplasm. Its function is as follows. Self assembles to form an icosahedral capsid. Most capsids appear to be large particles with an icosahedral symmetry of T=4 and consist of 240 copies of capsid protein, though a fraction forms smaller T=3 particles consisting of 180 capsid proteins. Entering capsids are transported along microtubules to the nucleus. Phosphorylation of the capsid is thought to induce exposure of nuclear localization signal in the C-terminal portion of the capsid protein that allows binding to the nuclear pore complex via the importin (karyopherin-) alpha and beta. Capsids are imported in intact form through the nuclear pore into the nuclear basket, where it probably binds NUP153. Only capsids that contain the mature viral genome can release the viral DNA and capsid protein into the nucleoplasm. Immature capsids get stuck in the basket. Capsids encapsulate the pre-genomic RNA and the P protein. Pre-genomic RNA is reverse-transcribed into DNA while the capsid is still in the cytoplasm. The capsid can then either be directed to the nucleus, providing more genomes for transcription, or bud through the endoplasmic reticulum to provide new virions. This is Capsid protein from Homo sapiens (Human).